Consider the following 245-residue polypeptide: Tetraspanin-6 (245 aa).

Topologically, residues 1–19 (MASPSRRLQTKPVITCLKS) are cytoplasmic. The helical transmembrane segment at 20–40 (VLLIYTFIFWITGVILLAVGI) threads the bilayer. At 41-59 (WGKVSLENYFSLLNEKATN) the chain is on the extracellular side. A helical membrane pass occupies residues 60 to 80 (VPFVLIGTGTVIILLGTFGCF). Residues 81–93 (ATCRTSAWMLKLY) lie on the Cytoplasmic side of the membrane. Residues 94–114 (AMFLTLIFLVELVAAIVGFVF) traverse the membrane as a helical segment. Residues 115 to 208 (RHEIKNSFKS…IKVMTTIESE (94 aa)) are Extracellular-facing. N-linked (GlcNAc...) asparagine glycosylation is present at N134. A helical membrane pass occupies residues 209–229 (MGVVAGISFGVACFQLIGIFL). Residues 230 to 245 (AYCLSRAITNNQYEIV) lie on the Cytoplasmic side of the membrane.

It belongs to the tetraspanin (TM4SF) family.

The protein resides in the membrane. This chain is Tetraspanin-6 (Tspan6), found in Mus musculus (Mouse).